Here is a 122-residue protein sequence, read N- to C-terminus: Large ribosomal subunit protein uL14 (122 aa).

This sequence belongs to the universal ribosomal protein uL14 family. In terms of assembly, part of the 50S ribosomal subunit. Forms a cluster with proteins L3 and L19. In the 70S ribosome, L14 and L19 interact and together make contacts with the 16S rRNA in bridges B5 and B8.

Functionally, binds to 23S rRNA. Forms part of two intersubunit bridges in the 70S ribosome. In Cupriavidus taiwanensis (strain DSM 17343 / BCRC 17206 / CCUG 44338 / CIP 107171 / LMG 19424 / R1) (Ralstonia taiwanensis (strain LMG 19424)), this protein is Large ribosomal subunit protein uL14.